The sequence spans 308 residues: D-alanine--D-alanine ligase (308 aa).

One can recognise an ATP-grasp domain in the interval 103–302; sequence KTVMKTAGVP…FDELVQWMVE (200 aa). 130–184 contacts ATP; sequence MEPPYVIKPVADGSSVGVYIITEQHQHPPQELFRDDWAYGDKLLVEKYVAGKELT. Mg(2+) contacts are provided by aspartate 252, glutamate 269, and asparagine 271.

Belongs to the D-alanine--D-alanine ligase family. The cofactor is Mg(2+). Mn(2+) serves as cofactor.

The protein resides in the cytoplasm. It catalyses the reaction 2 D-alanine + ATP = D-alanyl-D-alanine + ADP + phosphate + H(+). The protein operates within cell wall biogenesis; peptidoglycan biosynthesis. In terms of biological role, cell wall formation. This chain is D-alanine--D-alanine ligase, found in Rhodopseudomonas palustris (strain BisA53).